Consider the following 295-residue polypeptide: UDP-N-acetylenolpyruvoylglucosamine reductase (295 aa).

The 165-residue stretch at 24–188 folds into the FAD-binding PCMH-type domain; it reads KVGGDAEIFF…LKAVFKVNKG (165 aa). Arg168 is a catalytic residue. Residue Ser217 is the Proton donor of the active site. Residue Glu287 is part of the active site.

The protein belongs to the MurB family. The cofactor is FAD.

It localises to the cytoplasm. It catalyses the reaction UDP-N-acetyl-alpha-D-muramate + NADP(+) = UDP-N-acetyl-3-O-(1-carboxyvinyl)-alpha-D-glucosamine + NADPH + H(+). It functions in the pathway cell wall biogenesis; peptidoglycan biosynthesis. Functionally, cell wall formation. This is UDP-N-acetylenolpyruvoylglucosamine reductase from Rickettsia akari (strain Hartford).